A 322-amino-acid chain; its full sequence is Aspartate carbamoyltransferase catalytic subunit (322 aa).

Residues arginine 65 and threonine 66 each coordinate carbamoyl phosphate. Lysine 93 is an L-aspartate binding site. The carbamoyl phosphate site is built by arginine 115, histidine 143, and glutamine 146. L-aspartate is bound by residues arginine 176 and arginine 230. Positions 271 and 272 each coordinate carbamoyl phosphate.

It belongs to the aspartate/ornithine carbamoyltransferase superfamily. ATCase family. As to quaternary structure, heterododecamer (2C3:3R2) of six catalytic PyrB chains organized as two trimers (C3), and six regulatory PyrI chains organized as three dimers (R2).

The catalysed reaction is carbamoyl phosphate + L-aspartate = N-carbamoyl-L-aspartate + phosphate + H(+). It functions in the pathway pyrimidine metabolism; UMP biosynthesis via de novo pathway; (S)-dihydroorotate from bicarbonate: step 2/3. Functionally, catalyzes the condensation of carbamoyl phosphate and aspartate to form carbamoyl aspartate and inorganic phosphate, the committed step in the de novo pyrimidine nucleotide biosynthesis pathway. This chain is Aspartate carbamoyltransferase catalytic subunit, found in Brucella anthropi (strain ATCC 49188 / DSM 6882 / CCUG 24695 / JCM 21032 / LMG 3331 / NBRC 15819 / NCTC 12168 / Alc 37) (Ochrobactrum anthropi).